A 121-amino-acid chain; its full sequence is Basic phospholipase A2 BmjeTX-II (121 aa).

Intrachain disulfides connect Cys-26/Cys-114, Cys-28/Cys-45, Cys-44/Cys-95, Cys-50/Cys-121, Cys-51/Cys-88, Cys-58/Cys-82, and Cys-76/Cys-86. 3 residues coordinate Ca(2+): Tyr-27, Gly-29, and Gly-31. Residue His-48 is part of the active site. Ca(2+) is bound at residue Asp-49. Asp-89 is an active-site residue.

Requires Ca(2+) as cofactor. In terms of tissue distribution, expressed by the venom gland.

The protein resides in the secreted. The enzyme catalyses a 1,2-diacyl-sn-glycero-3-phosphocholine + H2O = a 1-acyl-sn-glycero-3-phosphocholine + a fatty acid + H(+). Functionally, snake venom phospholipase A2 (PLA2) that induces blockade of neuromuscular contraction in an indirectly stimulated chick biventer cervicis nerve-muscle preparation. Does not inhibit contraction of chick biventer cervicic nerve-muscle preparation in response to treatment with acetylcholine or KCl. The neuromuscular blockade is mediated by inhibitory action at the presynaptic motor nerve endings. Lyses skeletal myoblasts and myotubes in vitro, and intramuscular injection causes local muscle necrosis. Induces edema in the mouse foot pad. Induces a transient increase of IL-6 levels. PLA2 catalyzes the calcium-dependent hydrolysis of the 2-acyl groups in 3-sn-phosphoglycerides. The polypeptide is Basic phospholipase A2 BmjeTX-II (Bothrops marajoensis (Marajo lancehead)).